Here is a 366-residue protein sequence, read N- to C-terminus: uncharacterized protein (366 aa).

The interval 1 to 135 (MNQTGRTIGG…PPKNVDTIDK (135 aa)) is disordered. Over residues 26-38 (PSEDRVSSRDETP) the composition is skewed to basic and acidic residues. The residue at position 69 (serine 69) is a Phosphoserine. A Phosphothreonine modification is found at threonine 76. A Glycyl lysine isopeptide (Lys-Gly) (interchain with G-Cter in ubiquitin) cross-link involves residue lysine 78. A compositionally biased stretch (basic residues) spans 97-108 (QHNHHHHRRTSH). A Glycyl lysine isopeptide (Lys-Gly) (interchain with G-Cter in ubiquitin) cross-link involves residue lysine 187. Threonine 189 is modified (phosphothreonine). Lysine 242 participates in a covalent cross-link: Glycyl lysine isopeptide (Lys-Gly) (interchain with G-Cter in ubiquitin). Serine 288 and serine 294 each carry phosphoserine. Positions 313 to 366 (THSGHLEQKDVDDNRTSVPVTATQGSGHEDVVKKENTGNKLLRRVKSLKTSKKH) are disordered. Over residues 316 to 327 (GHLEQKDVDDNR) the composition is skewed to basic and acidic residues. Positions 328-338 (TSVPVTATQGS) are enriched in polar residues. Residues 339–349 (GHEDVVKKENT) show a composition bias toward basic and acidic residues. The span at 353–366 (LLRRVKSLKTSKKH) shows a compositional bias: basic residues. Position 359 is a phosphoserine (serine 359).

This sequence belongs to the pal1 family.

It is found in the cytoplasm. Its subcellular location is the nucleus. This is an uncharacterized protein from Saccharomyces cerevisiae (strain ATCC 204508 / S288c) (Baker's yeast).